The primary structure comprises 317 residues: Transaldolase (317 aa).

Lys132 functions as the Schiff-base intermediate with substrate in the catalytic mechanism.

It belongs to the transaldolase family. Type 1 subfamily. Homodimer.

The protein localises to the cytoplasm. The enzyme catalyses D-sedoheptulose 7-phosphate + D-glyceraldehyde 3-phosphate = D-erythrose 4-phosphate + beta-D-fructose 6-phosphate. The protein operates within carbohydrate degradation; pentose phosphate pathway; D-glyceraldehyde 3-phosphate and beta-D-fructose 6-phosphate from D-ribose 5-phosphate and D-xylulose 5-phosphate (non-oxidative stage): step 2/3. Functionally, transaldolase is important for the balance of metabolites in the pentose-phosphate pathway. This chain is Transaldolase, found in Haemophilus influenzae (strain PittGG).